We begin with the raw amino-acid sequence, 237 residues long: Undecaprenyl-diphosphatase (237 aa).

Helical transmembrane passes span 38–58, 65–85, 92–112, 126–146, 166–186, 191–211, and 217–237; these read QTAV…FDGI, WRII…GVLF, LFSS…ILMF, MSFL…FPGI, ALQY…ILGL, ITIL…YVLS, and GKIW…YLVG.

This sequence belongs to the UppP family.

It localises to the cell inner membrane. It carries out the reaction di-trans,octa-cis-undecaprenyl diphosphate + H2O = di-trans,octa-cis-undecaprenyl phosphate + phosphate + H(+). Its function is as follows. Catalyzes the dephosphorylation of undecaprenyl diphosphate (UPP). Confers resistance to bacitracin. The polypeptide is Undecaprenyl-diphosphatase (Thermotoga petrophila (strain ATCC BAA-488 / DSM 13995 / JCM 10881 / RKU-1)).